The sequence spans 174 residues: Ribosome maturation factor RimP (174 aa).

The protein belongs to the RimP family.

The protein localises to the cytoplasm. Required for maturation of 30S ribosomal subunits. This chain is Ribosome maturation factor RimP, found in Bdellovibrio bacteriovorus (strain ATCC 15356 / DSM 50701 / NCIMB 9529 / HD100).